The sequence spans 287 residues: N-acetylmannosamine kinase (287 aa).

Residues 5–12 (AIDIGGTK) and 131–138 (GVGGGIII) each bind ATP. Zn(2+) contacts are provided by His-155, Cys-165, Cys-167, and Cys-172.

This sequence belongs to the ROK (NagC/XylR) family. NanK subfamily. As to quaternary structure, homodimer.

The enzyme catalyses an N-acyl-D-mannosamine + ATP = an N-acyl-D-mannosamine 6-phosphate + ADP + H(+). The protein operates within amino-sugar metabolism; N-acetylneuraminate degradation; D-fructose 6-phosphate from N-acetylneuraminate: step 2/5. In terms of biological role, catalyzes the phosphorylation of N-acetylmannosamine (ManNAc) to ManNAc-6-P. The chain is N-acetylmannosamine kinase from Vibrio cholerae serotype O1 (strain ATCC 39541 / Classical Ogawa 395 / O395).